Here is a 105-residue protein sequence, read N- to C-terminus: Large ribosomal subunit protein uL24 (105 aa).

It belongs to the universal ribosomal protein uL24 family. In terms of assembly, part of the 50S ribosomal subunit.

Its function is as follows. One of two assembly initiator proteins, it binds directly to the 5'-end of the 23S rRNA, where it nucleates assembly of the 50S subunit. One of the proteins that surrounds the polypeptide exit tunnel on the outside of the subunit. This chain is Large ribosomal subunit protein uL24, found in Xanthomonas oryzae pv. oryzae (strain MAFF 311018).